A 113-amino-acid polypeptide reads, in one-letter code: Protein PucD (113 aa).

In terms of biological role, seems to be required for the LH-II stabilization. The protein is Protein PucD (pucD) of Rhodobacter capsulatus (Rhodopseudomonas capsulata).